Consider the following 163-residue polypeptide: 3-isopropylmalate dehydratase small subunit (163 aa).

Belongs to the LeuD family. LeuD type 2 subfamily. Heterodimer of LeuC and LeuD.

The enzyme catalyses (2R,3S)-3-isopropylmalate = (2S)-2-isopropylmalate. Its pathway is amino-acid biosynthesis; L-leucine biosynthesis; L-leucine from 3-methyl-2-oxobutanoate: step 2/4. Functionally, catalyzes the isomerization between 2-isopropylmalate and 3-isopropylmalate, via the formation of 2-isopropylmaleate. This chain is 3-isopropylmalate dehydratase small subunit, found in Thermococcus kodakarensis (strain ATCC BAA-918 / JCM 12380 / KOD1) (Pyrococcus kodakaraensis (strain KOD1)).